Consider the following 123-residue polypeptide: Small ribosomal subunit protein uS12 (123 aa).

Asp89 is subject to 3-methylthioaspartic acid.

Belongs to the universal ribosomal protein uS12 family. In terms of assembly, part of the 30S ribosomal subunit. Contacts proteins S8 and S17. May interact with IF1 in the 30S initiation complex.

Its function is as follows. With S4 and S5 plays an important role in translational accuracy. Functionally, interacts with and stabilizes bases of the 16S rRNA that are involved in tRNA selection in the A site and with the mRNA backbone. Located at the interface of the 30S and 50S subunits, it traverses the body of the 30S subunit contacting proteins on the other side and probably holding the rRNA structure together. The combined cluster of proteins S8, S12 and S17 appears to hold together the shoulder and platform of the 30S subunit. In Geotalea uraniireducens (strain Rf4) (Geobacter uraniireducens), this protein is Small ribosomal subunit protein uS12.